The primary structure comprises 63 residues: Large ribosomal subunit protein eL37 (63 aa).

Zn(2+)-binding residues include Cys20, Cys23, Cys35, and Cys38. The C4-type zinc finger occupies 20–38 (CRRCGRRAFNVKKGYCAAC).

It belongs to the eukaryotic ribosomal protein eL37 family. Part of the 50S ribosomal subunit. Requires Zn(2+) as cofactor.

Binds to the 23S rRNA. The polypeptide is Large ribosomal subunit protein eL37 (Thermococcus kodakarensis (strain ATCC BAA-918 / JCM 12380 / KOD1) (Pyrococcus kodakaraensis (strain KOD1))).